The chain runs to 199 residues: MIKLIVGLGNPGAEYTATRHNAGFWLIDQLAREAGTTLRDERRFHGFYAKARLHGEEVHLLEPQTYMNRSGQSVVALAQFFKILPDQILVAHDELDLPPGTVKLKLGGGSGGHNGLKDITAHLSSQQYWRLRIGIGHPRDLISESARAGAKPDVANFVLKPPRREEQDVIDASIERALAVMPMVVKGELDRATMQLHRN.

Tyr-15 serves as a coordination point for tRNA. Catalysis depends on His-20, which acts as the Proton acceptor. TRNA contacts are provided by Tyr-66, Asn-68, and Asn-114.

It belongs to the PTH family. In terms of assembly, monomer.

It localises to the cytoplasm. It catalyses the reaction an N-acyl-L-alpha-aminoacyl-tRNA + H2O = an N-acyl-L-amino acid + a tRNA + H(+). Its function is as follows. Hydrolyzes ribosome-free peptidyl-tRNAs (with 1 or more amino acids incorporated), which drop off the ribosome during protein synthesis, or as a result of ribosome stalling. Catalyzes the release of premature peptidyl moieties from peptidyl-tRNA molecules trapped in stalled 50S ribosomal subunits, and thus maintains levels of free tRNAs and 50S ribosomes. The sequence is that of Peptidyl-tRNA hydrolase from Burkholderia cenocepacia (strain HI2424).